The chain runs to 147 residues: HTH-type transcriptional regulator MntR (147 aa).

The region spanning 1–63 is the HTH dtxR-type domain; that stretch reads MPTPSMEDYI…YEKYRGFVLT (63 aa). Residues D8, E11, H77, E99, E102, and H103 each contribute to the Mn(2+) site.

Belongs to the DtxR/MntR family. As to quaternary structure, homodimer.

It localises to the cytoplasm. With respect to regulation, DNA binding is strongly activated by Mn(2+). Functionally, central regulator of manganese homeostasis. The protein is HTH-type transcriptional regulator MntR of Oceanobacillus iheyensis (strain DSM 14371 / CIP 107618 / JCM 11309 / KCTC 3954 / HTE831).